The sequence spans 125 residues: Fatty acid-binding protein, liver-type (125 aa).

This sequence belongs to the calycin superfamily. Fatty-acid binding protein (FABP) family.

The protein resides in the cytoplasm. The protein is Fatty acid-binding protein, liver-type (fabp1) of Takifugu rubripes (Japanese pufferfish).